A 394-amino-acid chain; its full sequence is Elongation factor Tu (394 aa).

Positions 10-204 (KLHINVGTIG…VLDSYIPEPK (195 aa)) constitute a tr-type G domain. A G1 region spans residues 19-26 (GHVDHGKT). 19–26 (GHVDHGKT) contributes to the GTP binding site. Residue Thr26 participates in Mg(2+) binding. The segment at 60–64 (GITIN) is G2. Residues 81–84 (DCPG) are G3. Residues 81 to 85 (DCPGH) and 136 to 139 (NKCD) contribute to the GTP site. The tract at residues 136-139 (NKCD) is G4. The tract at residues 174 to 176 (SAL) is G5.

Belongs to the TRAFAC class translation factor GTPase superfamily. Classic translation factor GTPase family. EF-Tu/EF-1A subfamily. In terms of assembly, monomer.

The protein resides in the cytoplasm. It carries out the reaction GTP + H2O = GDP + phosphate + H(+). Its function is as follows. GTP hydrolase that promotes the GTP-dependent binding of aminoacyl-tRNA to the A-site of ribosomes during protein biosynthesis. This chain is Elongation factor Tu, found in Baumannia cicadellinicola subsp. Homalodisca coagulata.